The sequence spans 204 residues: UPF0637 protein SaurJH9_1166 (204 aa).

The protein belongs to the UPF0637 family.

This Staphylococcus aureus (strain JH9) protein is UPF0637 protein SaurJH9_1166.